Reading from the N-terminus, the 327-residue chain is Eukaryotic translation initiation factor 3 subunit I (327 aa).

5 WD repeats span residues 8-49, 51-89, 188-227, 229-268, and 285-324; these read GHER…GSYD, HNGAVWDIDVSWDTTKCVTASGDLTVKIWDAELGNCLYT, VHRYSVQDLQLSPRGDFLISASRDKTAALLDVNDLKKLKQ, KSERPVNSACISPNRDHICLGGGEDAMQVTQTSVSAGHFE, and GHFGPINTMAWHPSGTIIATGGEDGYIRIQEFDEDYLGFT.

It belongs to the eIF-3 subunit I family. As to quaternary structure, component of the eukaryotic translation initiation factor 3 (eIF-3) complex.

It is found in the cytoplasm. Functionally, component of the eukaryotic translation initiation factor 3 (eIF-3) complex, which is involved in protein synthesis of a specialized repertoire of mRNAs and, together with other initiation factors, stimulates binding of mRNA and methionyl-tRNAi to the 40S ribosome. The eIF-3 complex specifically targets and initiates translation of a subset of mRNAs involved in cell proliferation. This Caenorhabditis elegans protein is Eukaryotic translation initiation factor 3 subunit I.